The primary structure comprises 255 residues: Small ribosomal subunit protein uS2 (255 aa).

The tract at residues 230–255 (QSSSGRDLGASSEVPVEPALEEAAEG) is disordered.

This sequence belongs to the universal ribosomal protein uS2 family.

The sequence is that of Small ribosomal subunit protein uS2 from Rhizobium leguminosarum bv. trifolii (strain WSM2304).